A 412-amino-acid polypeptide reads, in one-letter code: Phytoene synthase, chloroplastic (412 aa).

This sequence belongs to the phytoene/squalene synthase family. Monomer. In terms of tissue distribution, expressed in roots, leaves, flower buds, sepals, petals, lips and lip crests.

It is found in the plastid. Its subcellular location is the chloroplast. The catalysed reaction is 2 (2E,6E,10E)-geranylgeranyl diphosphate = 15-cis-phytoene + 2 diphosphate. It participates in carotenoid biosynthesis; phytoene biosynthesis; all-trans-phytoene from geranylgeranyl diphosphate: step 1/1. Its function is as follows. Catalyzes the reaction from prephytoene diphosphate to phytoene. The sequence is that of Phytoene synthase, chloroplastic (PSY) from Oncidium hybrid cultivar (Orchid).